Consider the following 458-residue polypeptide: MNTSHKTLKTIAILGQPNVGKSSLFNRLARERIAITSDFAGTTRDINKRKIALNGHEVELLDTGGMAKDALLSKEIKALNLKAAQMSDLILYVVDGKSIPSDEDLKLFREVFKINPNCFLVINKIDNDKEKERAYAFSSFGMPKSFNISVSHNRGISALIDAVLSALDLNQIIEQDLDADILESLETPNNALEEEIIQVGIIGRVNVGKSSLLNALTKKERSLVSSVAGTTIDPIDETILIGDQKICFVDTAGIRHRGKILGIEKYALERTQKALEKSHIALLVLDVSAPFVELDEKISSLADKHSLGIILVLNKWDIRYAPYEEIIATLKRKFRFLEYAPVITTSCLKARHIDEIKHKIIEVYECFSKRIPTSLLNSVINQATQKHPLPSDGGKLVKVYYATQFATKPPQISLIMNRPKALHFSYKRYLINTLRKEFNFLGTPLILNAKDKKSAQQN.

EngA-type G domains lie at lysine 9–glutamine 171 and isoleucine 197–serine 368. GTP-binding positions include glycine 15–serine 22, aspartate 62–methionine 66, asparagine 123–aspartate 126, glycine 203–serine 210, aspartate 250–isoleucine 254, and asparagine 314–aspartate 317. The KH-like domain occupies lysine 369–lysine 453.

It belongs to the TRAFAC class TrmE-Era-EngA-EngB-Septin-like GTPase superfamily. EngA (Der) GTPase family. As to quaternary structure, associates with the 50S ribosomal subunit.

GTPase that plays an essential role in the late steps of ribosome biogenesis. The sequence is that of GTPase Der from Helicobacter pylori (strain ATCC 700392 / 26695) (Campylobacter pylori).